Consider the following 2094-residue polypeptide: Nuclear mitotic apparatus protein 1 (2094 aa).

The head (Globular) stretch occupies residues 1 to 210 (MTLHATRAAT…SPMGDILQTP (210 aa)). The residue at position 160 (serine 160) is a Phosphoserine. At threonine 161 the chain carries Phosphothreonine. Phosphoserine is present on residues serine 167 and serine 201. Threonine 209 is modified (phosphothreonine). Positions 211 to 1681 (QFQMRRLKKQ…ADQQLRDLGK (1471 aa)) form a coiled coil. Serine 269 carries the phosphoserine modification. Lysine 377 bears the N6-acetyllysine mark. Serine 386 and serine 398 each carry phosphoserine. At lysine 443 the chain carries N6-acetyllysine. 2 disordered regions span residues 617–636 (QLQAANDARDNAQTSVTQAQ) and 723–759 (LKEQQCRATEMEAESRSLMEQREREQKELEQEKAGRK). Residues 627-636 (NAQTSVTQAQ) are compositionally biased toward polar residues. Lysine 878 carries the N6-acetyllysine modification. Disordered stretches follow at residues 921 to 1000 (SLEL…TQER), 1081 to 1143 (LVKK…EGLT), and 1173 to 1223 (ELGH…SSLI). The segment covering 935 to 951 (ASDQLGEQQGRPFSSTH) has biased composition (polar residues). 2 stretches are compositionally biased toward basic and acidic residues: residues 956-972 (AMEREAEQMGGELERLR) and 983-998 (QEERGQQEREVARLTQ). Residue serine 1183 is modified to Phosphoserine. Residues 1194 to 1206 (KAQDHSKAEEEWK) are compositionally biased toward basic and acidic residues. Serine 1221 is subject to Phosphoserine. Lysine 1507 bears the N6-acetyllysine mark. Serine 1583 is subject to Phosphoserine. Residue lysine 1681 forms a Glycyl lysine isopeptide (Lys-Gly) (interchain with G-Cter in SUMO2) linkage. A membrane-binding domain 1 region spans residues 1681–1858 (KFQVATDALK…NSALLSLPGY (178 aa)). A tail (Globular) region spans residues 1682 to 2094 (FQVATDALKS…TPRAKGKVKH (413 aa)). Residues serine 1703, serine 1706, and serine 1710 each carry the phosphoserine modification. Residues 1718-1743 (SVASKLPRTQPDGTSVPGEPASPISQ) are disordered. The short motif at 1724 to 1730 (PRTQPDG) is the Tankyrase-binding domain element. Serine 1739 and serine 1742 each carry phosphoserine. Residue lysine 1748 forms a Glycyl lysine isopeptide (Lys-Gly) (interchain with G-Cter in SUMO1); alternate linkage. A Glycyl lysine isopeptide (Lys-Gly) (interchain with G-Cter in SUMO2); alternate cross-link involves residue lysine 1748. Phosphoserine is present on serine 1751. Serine 1754 is subject to Phosphoserine; by PLK1. Residue tyrosine 1756 is modified to Phosphotyrosine. A Phosphothreonine modification is found at threonine 1758. Positions 1760-1795 (TPARGQAPLETSLDSLGDAFPDSGRKTRSARRRTTQ) are disordered. The segment at 1770-1792 (TSLDSLGDAFPDSGRKTRSARRR) is 4.1-binding domain. Serine 1771 carries the post-translational modification Phosphoserine; by PLK1. Phosphoserine occurs at positions 1774 and 1782. At threonine 1786 the chain carries Phosphothreonine. Lysine 1804 is covalently cross-linked (Glycyl lysine isopeptide (Lys-Gly) (interchain with G-Cter in SUMO2)). 2 disordered regions span residues 1807-1883 (LEEP…GRNS) and 1937-2094 (EMKT…KVKH). 2 positions are modified to phosphoserine: serine 1812 and serine 1815. The span at 1812-1839 (SANSSFYSTQSAPASQANLRATSSTQSL) shows a compositional bias: polar residues. Serine 1816 is subject to Phosphoserine; by PLK1. Tyrosine 1818 is subject to Phosphotyrosine. At serine 1822 the chain carries Phosphoserine. Position 1826 is a phosphoserine; alternate (serine 1826). A glycan (O-linked (GlcNAc) serine; alternate) is linked at serine 1826. 2 positions are modified to phosphoserine: serine 1844 and serine 1869. Positions 1864–1967 (SSARRSQARM…AEGVGITTRQ (104 aa)) are tubulin-binding domain. The interval 1874 to 1908 (SSGAPQGRNSFYMGTCQDEPEQLDDWNRIAELQQR) is GPSM2-binding domain. Residues 1937–1948 (EMKTGDPRETLR) are compositionally biased toward basic and acidic residues. Serine 1951 is modified (phosphoserine). A membrane-binding domain 2 region spans residues 1963–2042 (ITTRQQRKRV…SILNTPKKLG (80 aa)). A Nuclear localization signal motif is present at residues 1966–1971 (RQQRKR). Phosphoserine is present on residues serine 1973 and serine 1974. A Phosphothreonine modification is found at threonine 1982. Position 1985 is a phosphoserine (serine 1985). Threonine 1997 is modified (phosphothreonine; by CDK1). Basic and acidic residues predominate over residues 1997–2006 (TPRDRHEGRK). Serine 2029 carries the phosphoserine modification. At threonine 2037 the chain carries Phosphothreonine. Serine 2044 and serine 2059 each carry phosphoserine. Phosphoserine; by CDK1 is present on serine 2069. Low complexity predominate over residues 2073–2085 (ATTTTGTATVATT). Threonine 2085 is modified (phosphothreonine; by CDK1).

In terms of assembly, homodimer. Also forms multiarm oligomers by association of C-terminal tail domains, oligomers may further assemble to form a hexagonal nuclear lattice-like network. Associates with the dynein-dynactin complex; this association promotes the transport and accumulation of NUMA1 at the mitotic spindle poles that is inhibited by the BRISC complex in a PLK1-dependent manner. Part of a spindle orientation complex at least composed of GNAI1, GPSM2 and NUMA1. Interacts (via C-terminus) with microtubules (MTs); this interaction is direct and promotes both MT bundle formation and stability in a dynein-dynactin complex- and CDK1-independent manner. Interacts with EPB41 and EPB41L2; these interactions are negatively regulated by CDK1 during metaphase and are important for anaphase-specific localization of NUMA1 in symmetrically dividing cells. Interacts (via C-terminus) with GPSM2 (via TPR repeats); this interaction is direct, prevented by competitive binding of INSC, is inhibited in a PLK1-dependent manner, blocks the association of NUMA1 with MTs and inhibits NUMA1-induced MT bundle formation, prevents the association of NUMA1 with SPAG5, induces mitotic spindle pole localization of GPSM2, both metaphase cell cortex localization of NUMA1 and mitotic spindle organization. Does not interact with GPSM2 during anaphase. Interacts (via C-terminus) with the nuclear importin alpha/importin beta receptor; this interaction is inhibited by RanGTP. Interacts (via C-terminus) with KPNB1; this interaction is inhibited by RanGTP and the BRISC complex. Interacts with ABRAXAS2 and the BRISC complex; these interactions regulate mitotic spindle assembly. Interacts (via N-terminal end of the coiled-coil domain) with RAE1; this interaction promotes mitotic spindle formation. Interacts (via C-terminus) with SPAG5 (via C-terminus); this interaction promotes the recruitment of SPAG5 to the MTs at spindle poles in a dynein-dynactin-dependent manner and regulates mitotic spindle organization and proper chromosome alignment during mitosis. Interacts with TNKS; this interaction occurs at the onset of mitosis. Interacts with TNKS2. Interacts with tubulin. Interacts with KHDC3 (via C-terminus). Phosphorylation and dephosphorylation on Thr-2037 regulates the extent of cortical NUMA1 and the dynein-dynactin complex localization during mitotic metaphase and anaphase. In metaphase, phosphorylation on Thr-2037 occurs in a kinase CDK1-dependent manner; this phosphorylation maintains low levels of cortical dynein-dynactin complex at metaphase, and hence proper spindle positioning. In anaphase, dephosphorylated on Thr-2037 by phosphatase PPP2CA; this dephosphorylation stimulates its membrane association and with the dynein-dynactin complex its enrichment at the cell cortex, and hence robust spindle elongation. Probably also phosphorylated on Thr-1997 and Ser-2069 by CDK1; these phosphorylations may regulate its cell cortex recruitment during metaphase and anaphase. Phosphorylated on Ser-1751, Ser-1754, Ser-1771 and Ser-1816 by PLK1; these phosphorylations induce cortical dynein-dynactin complex dissociation from the NUMA1-GPSM2 complex and negatively regulates cortical dynein-dynactin complex localization. In terms of processing, ADP-ribosylated by TNKS at the onset of mitosis; ADP-ribosylation is not required for its localization to spindle poles. Post-translationally, O-glycosylated during cytokinesis at sites identical or close to phosphorylation sites, this interferes with the phosphorylation status. Ubiquitinated with 'Lys-63'-linked polyubiquitin chains. Deubiquitination by the BRISC complex is important for the incorporation of NUMA1 into mitotic spindle poles and normal spindle pole function, probably by modulating interactions between NUMA1, dynein-dynactin complex and importin-beta. Expressed in testis, speen, liver, lung, spinal cord and brain. Expressed in Purkinje neurons (at protein level).

It localises to the nucleus. The protein localises to the nucleoplasm. The protein resides in the nucleus matrix. It is found in the chromosome. Its subcellular location is the cytoplasm. It localises to the cytoskeleton. The protein localises to the microtubule organizing center. The protein resides in the centrosome. It is found in the spindle pole. Its subcellular location is the cell cortex. It localises to the cell membrane. The protein localises to the lateral cell membrane. Functionally, microtubule (MT)-binding protein that plays a role in the formation and maintenance of the spindle poles and the alignement and the segregation of chromosomes during mitotic cell division. Functions to tether the minus ends of MTs at the spindle poles, which is critical for the establishment and maintenance of the spindle poles. Plays a role in the establishment of the mitotic spindle orientation during metaphase and elongation during anaphase in a dynein-dynactin-dependent manner. In metaphase, part of a ternary complex composed of GPSM2 and G(i) alpha proteins, that regulates the recruitment and anchorage of the dynein-dynactin complex in the mitotic cell cortex regions situated above the two spindle poles, and hence regulates the correct oritentation of the mitotic spindle. During anaphase, mediates the recruitment and accumulation of the dynein-dynactin complex at the cell membrane of the polar cortical region through direct association with phosphatidylinositol 4,5-bisphosphate (PI(4,5)P2), and hence participates in the regulation of the spindle elongation and chromosome segregation. Also binds to other polyanionic phosphoinositides, such as phosphatidylinositol 3-phosphate (PIP), lysophosphatidic acid (LPA) and phosphatidylinositol triphosphate (PIP3), in vitro. Also required for proper orientation of the mitotic spindle during asymmetric cell divisions. Plays a role in mitotic MT aster assembly. Involved in anastral spindle assembly. Positively regulates TNKS protein localization to spindle poles in mitosis. Highly abundant component of the nuclear matrix where it may serve a non-mitotic structural role, occupies the majority of the nuclear volume. Required for epidermal differentiation and hair follicle morphogenesis. This Mus musculus (Mouse) protein is Nuclear mitotic apparatus protein 1.